Here is a 124-residue protein sequence, read N- to C-terminus: Small ribosomal subunit protein uS12 (124 aa).

Residue D89 is modified to 3-methylthioaspartic acid.

The protein belongs to the universal ribosomal protein uS12 family. In terms of assembly, part of the 30S ribosomal subunit. Contacts proteins S8 and S17. May interact with IF1 in the 30S initiation complex.

With S4 and S5 plays an important role in translational accuracy. Functionally, interacts with and stabilizes bases of the 16S rRNA that are involved in tRNA selection in the A site and with the mRNA backbone. Located at the interface of the 30S and 50S subunits, it traverses the body of the 30S subunit contacting proteins on the other side and probably holding the rRNA structure together. The combined cluster of proteins S8, S12 and S17 appears to hold together the shoulder and platform of the 30S subunit. The polypeptide is Small ribosomal subunit protein uS12 (Moorella thermoacetica (strain ATCC 39073 / JCM 9320)).